Consider the following 122-residue polypeptide: Large ribosomal subunit protein uL18 (122 aa).

The protein belongs to the universal ribosomal protein uL18 family. Part of the 50S ribosomal subunit; part of the 5S rRNA/L5/L18/L25 subcomplex. Contacts the 5S and 23S rRNAs.

Functionally, this is one of the proteins that bind and probably mediate the attachment of the 5S RNA into the large ribosomal subunit, where it forms part of the central protuberance. This is Large ribosomal subunit protein uL18 from Leptospira interrogans serogroup Icterohaemorrhagiae serovar copenhageni (strain Fiocruz L1-130).